Consider the following 421-residue polypeptide: Glutamate dehydrogenase (421 aa).

K105 is a catalytic residue. 220–226 is an NAD(+) binding site; that stretch reads GYGNAGY.

Belongs to the Glu/Leu/Phe/Val dehydrogenases family. Homohexamer.

It is found in the cytoplasm. The protein resides in the chromosome. The enzyme catalyses L-glutamate + NAD(+) + H2O = 2-oxoglutarate + NH4(+) + NADH + H(+). It catalyses the reaction L-glutamate + NADP(+) + H2O = 2-oxoglutarate + NH4(+) + NADPH + H(+). In Thermococcus kodakarensis (strain ATCC BAA-918 / JCM 12380 / KOD1) (Pyrococcus kodakaraensis (strain KOD1)), this protein is Glutamate dehydrogenase (gdhA).